A 386-amino-acid chain; its full sequence is Centrosomal protein of 44 kDa (386 aa).

Residues 11–194 (RKLEQVLRSL…GVPEGTVTST (184 aa)) form a binds with microtubules and centrioles region. Residues 232–262 (ELTALQIALAECQEKLKKLTWIEKRLECLEA) adopt a coiled-coil conformation. S329 bears the Phosphoserine mark. Positions 359–382 (SEETTMQKMERMKKMFEETAELLK) form a coiled coil.

As to quaternary structure, interacts with CROCC. Interacts with POC1B; the interaction is direct and recruits POC1B to centriolar microtubules. Binds to centriolar microtubules.

It is found in the cytoplasm. It localises to the cytoskeleton. The protein resides in the microtubule organizing center. Its subcellular location is the centrosome. The protein localises to the centriole. It is found in the spindle pole. It localises to the midbody. Its function is as follows. Centriole-enriched microtubule-binding protein involved in centriole biogenesis. In collaboration with CEP295 and POC1B, is required for the centriole-to-centrosome conversion by ensuring the formation of bona fide centriole wall. Functions as a linker component that maintains centrosome cohesion. Associates with CROCC and regulates its stability and localization to the centrosome. This chain is Centrosomal protein of 44 kDa (Cep44), found in Rattus norvegicus (Rat).